The following is a 302-amino-acid chain: Arginase (302 aa).

Mn(2+)-binding residues include H103, D126, H128, and D130. Substrate-binding positions include 128–132 (HGDLN), 139–141 (SGN), and D180. 2 residues coordinate Mn(2+): D229 and D231. Substrate contacts are provided by T243 and E274.

It belongs to the arginase family. Requires Mn(2+) as cofactor.

It catalyses the reaction L-arginine + H2O = urea + L-ornithine. It functions in the pathway nitrogen metabolism; urea cycle; L-ornithine and urea from L-arginine: step 1/1. The protein is Arginase (arg) of Staphylococcus aureus (strain COL).